We begin with the raw amino-acid sequence, 183 residues long: Abscisic acid receptor PYL10 (183 aa).

Residues 20 to 172 are START-like; sequence HELVESQCSS…NLNSLADVTE (153 aa). Cys27 and Cys153 are oxidised to a cystine. Residues Lys56, 85–90, 112–118, and Glu137 each bind abscisate; these read ATKSTE and RLKNYSS. The short motif at 81 to 85 is the Gate loop element; it reads SGLPA. The Latch loop signature appears at 111-113; the sequence is HRL.

The protein belongs to the PYR/PYL/RCAR abscisic acid intracellular receptor family. In terms of assembly, monomer. Forms heterodimer with PYL13, thus antagonizing PP2Cs-binding and ABA-independent inhibition of PP2Cs. Homodimer. Binds ABA on one subunit only. Binds to CARs protein in an ABA-independent manner, both at the plasma membrane and in the nucleus. Interacts with ABI1 and HAB1, and possibly with other PP2Cs, in an ABA-independent manner.

It localises to the cytoplasm. The protein resides in the nucleus. The protein localises to the cell membrane. In terms of biological role, receptor for abscisic acid (ABA) required for ABA-mediated responses such as stomatal closure and germination inhibition. Inhibits the activity of group-A protein phosphatases type 2C (PP2Cs) in an ABA-independent manner but more efficiently when activated by ABA. Can be activated by both (-)-ABA and (+)-ABA. The polypeptide is Abscisic acid receptor PYL10 (PYL10) (Arabidopsis thaliana (Mouse-ear cress)).